Here is a 100-residue protein sequence, read N- to C-terminus: Small ribosomal subunit protein uS14c (100 aa).

This sequence belongs to the universal ribosomal protein uS14 family. In terms of assembly, part of the 30S ribosomal subunit.

Its subcellular location is the plastid. The protein localises to the chloroplast. Binds 16S rRNA, required for the assembly of 30S particles. The polypeptide is Small ribosomal subunit protein uS14c (Tupiella akineta (Green alga)).